We begin with the raw amino-acid sequence, 633 residues long: tRNA uridine 5-carboxymethylaminomethyl modification enzyme MnmG (633 aa).

FAD is bound by residues 13–18 (GGGHAG), V125, and S180. 273–287 (GPRYCPSIEDKITRF) provides a ligand contact to NAD(+). Q370 provides a ligand contact to FAD.

The protein belongs to the MnmG family. In terms of assembly, homodimer. Heterotetramer of two MnmE and two MnmG subunits. FAD is required as a cofactor.

It localises to the cytoplasm. Its function is as follows. NAD-binding protein involved in the addition of a carboxymethylaminomethyl (cmnm) group at the wobble position (U34) of certain tRNAs, forming tRNA-cmnm(5)s(2)U34. This is tRNA uridine 5-carboxymethylaminomethyl modification enzyme MnmG from Alteromonas mediterranea (strain DSM 17117 / CIP 110805 / LMG 28347 / Deep ecotype).